A 48-amino-acid chain; its full sequence is ATP synthase protein 8 (48 aa).

Residues 4 to 24 (LVPFYFINILSFGFLIFTVLL) form a helical membrane-spanning segment.

The protein belongs to the ATPase protein 8 family. F-type ATPases have 2 components, CF(1) - the catalytic core - and CF(0) - the membrane proton channel.

The protein localises to the mitochondrion membrane. Functionally, mitochondrial membrane ATP synthase (F(1)F(0) ATP synthase or Complex V) produces ATP from ADP in the presence of a proton gradient across the membrane which is generated by electron transport complexes of the respiratory chain. F-type ATPases consist of two structural domains, F(1) - containing the extramembraneous catalytic core and F(0) - containing the membrane proton channel, linked together by a central stalk and a peripheral stalk. During catalysis, ATP synthesis in the catalytic domain of F(1) is coupled via a rotary mechanism of the central stalk subunits to proton translocation. Part of the complex F(0) domain. Minor subunit located with subunit a in the membrane. In Schizosaccharomyces pombe (strain 972 / ATCC 24843) (Fission yeast), this protein is ATP synthase protein 8 (atp8).